The primary structure comprises 215 residues: Probable peptidyl-prolyl cis-trans isomerase (215 aa).

A PPIase cyclophilin-type domain is found at 38–197 (DGIYAVMETN…RRGAAAKRFV (160 aa)).

The protein belongs to the cyclophilin-type PPIase family.

The catalysed reaction is [protein]-peptidylproline (omega=180) = [protein]-peptidylproline (omega=0). Its function is as follows. PPIases accelerate the folding of proteins. It catalyzes the cis-trans isomerization of proline imidic peptide bonds in oligopeptides. In Treponema pallidum (strain Nichols), this protein is Probable peptidyl-prolyl cis-trans isomerase (ppiB).